The primary structure comprises 224 residues: Small ribosomal subunit protein eS1 (224 aa).

The protein belongs to the eukaryotic ribosomal protein eS1 family.

This Methanococcus maripaludis (strain C7 / ATCC BAA-1331) protein is Small ribosomal subunit protein eS1.